Reading from the N-terminus, the 733-residue chain is Protein ROG3 (733 aa).

A PY-motif motif is present at residues 460-463 (PPNY). Residues 518–566 (RDNLGLPPSASSAAASRSLSPLLNVPAPEDGTERILPQSALGPNSGSVP) form a disordered region. The span at 523 to 540 (LPPSASSAAASRSLSPLL) shows a compositional bias: low complexity. The short motif at 625-628 (PPSY) is the PY-motif element. Disordered regions lie at residues 636 to 658 (QPRK…SIPT) and 693 to 733 (ELTS…GNKR). Low complexity predominate over residues 646 to 658 (RNSSTTLSSSIPT).

It belongs to the arrestin family. As to quaternary structure, interacts with RSP5 via its 2 PY-motifs.

Involved in resistance to GST substrate o-dinitrobenzene (o-DNB). This chain is Protein ROG3 (ROG3), found in Saccharomyces cerevisiae (strain ATCC 204508 / S288c) (Baker's yeast).